We begin with the raw amino-acid sequence, 478 residues long: PTS system mannitol-specific EIICB component (478 aa).

The Cytoplasmic portion of the chain corresponds to 1 to 29; sequence MQQQEQQQGGMKVKVQRFGSYLSGMIMPN. Residues 18–347 form the PTS EIIC type-2 domain; sequence FGSYLSGMIM…VILKSSKASE (330 aa). Residues 30–51 form a helical membrane-spanning segment; sequence IGAFIAWGIITALFIPAGWFPN. Residues 52–55 are Extracellular-facing; it reads EQLN. The chain crosses the membrane as a helical span at residues 56–76; it reads TLVSPMITYLLPLLIAYTGGK. The Cytoplasmic segment spans residues 77 to 139; that stretch reads MIYDHRGGVV…QGFEMLINNF (63 aa). Residues 140–161 traverse the membrane as a helical segment; that stretch reads TAGIVGAALTILAFYAIGPVVL. Residues 162–170 are Extracellular-facing; sequence TLNKLLAAG. A helical membrane pass occupies residues 171–191; it reads VEVIVHANLLPVASVFVEPAK. Residues 192–278 lie on the Cytoplasmic side of the membrane; that stretch reads VLFLNNAINH…ILMKPALILA (87 aa). Residues 279 to 298 form a helical membrane-spanning segment; it reads AIAGGASGLLTFTIFNAGLV. Topologically, residues 299-318 are extracellular; it reads AAASPGSIIALMAMTPRGGY. Residues 319–340 traverse the membrane as a helical segment; it reads FGVLAGVLVAAAVSFIVSAVIL. The Cytoplasmic portion of the chain corresponds to 341 to 478; that stretch reads KSSKASEEDL…YDELIEKLKK (138 aa). In terms of domain architecture, PTS EIIB type-2 spans 390-478; that stretch reads NKIIFACDAG…YDELIEKLKK (89 aa). The active-site Phosphocysteine intermediate; for EIIB activity is the cysteine 396. A Phosphocysteine; by EIIA modification is found at cysteine 396.

Homodimer.

It is found in the cell membrane. It carries out the reaction D-mannitol(out) + N(pros)-phospho-L-histidyl-[protein] = D-mannitol 1-phosphate(in) + L-histidyl-[protein]. Functionally, the phosphoenolpyruvate-dependent sugar phosphotransferase system (sugar PTS), a major carbohydrate active transport system, catalyzes the phosphorylation of incoming sugar substrates concomitantly with their translocation across the cell membrane. The enzyme II CmtAB PTS system is involved in D-mannitol transport. This chain is PTS system mannitol-specific EIICB component, found in Bacillus subtilis (strain 168).